Consider the following 155-residue polypeptide: Ribosomal RNA large subunit methyltransferase H (155 aa).

Residues Leu-72, Gly-104, and 123–128 contribute to the S-adenosyl-L-methionine site; that span reads LSRMTF.

This sequence belongs to the RNA methyltransferase RlmH family. In terms of assembly, homodimer.

The protein localises to the cytoplasm. It catalyses the reaction pseudouridine(1915) in 23S rRNA + S-adenosyl-L-methionine = N(3)-methylpseudouridine(1915) in 23S rRNA + S-adenosyl-L-homocysteine + H(+). Specifically methylates the pseudouridine at position 1915 (m3Psi1915) in 23S rRNA. The polypeptide is Ribosomal RNA large subunit methyltransferase H (Kosmotoga olearia (strain ATCC BAA-1733 / DSM 21960 / TBF 19.5.1)).